A 385-amino-acid chain; its full sequence is Zinc cluster transcription factor CZF1 (385 aa).

The span at 1 to 19 shows a compositional bias: polar residues; it reads MSSIPNINWNDPNNGKSNT. 3 disordered regions span residues 1-117, 154-216, and 233-308; these read MSSI…QQPL, LQQR…QQWD, and SSIQ…KPIT. Positions 20–38 are enriched in low complexity; it reads SRQSQPQPQLPSNVSPPNS. 2 stretches are compositionally biased toward polar residues: residues 52–67 and 88–97; these read YGSSQFSNEYSRNPNT and YPVQQTAQQR. Low complexity-rich tracts occupy residues 102–117 and 154–169; these read LQQVHSQQQQQQQQPL and LQQRQQAQGQQLKSQL. Residues 170 to 200 are compositionally biased toward polar residues; that stretch reads NEQNAMMSASTQQYPVQDFTNPYPNAQNPAE. Low complexity-rich tracts occupy residues 201–214 and 233–256; these read QQQQQQPLRTQSQQ and SSIQQQIPPQNLSPSEQQQVKQQQ. A compositionally biased stretch (basic residues) spans 265-275; the sequence is KKKPGRKPKLR. Residues 279–291 are compositionally biased toward polar residues; that stretch reads ESSSETPQVPKTA. Residues 315 to 342 constitute a DNA-binding region (zn(2)-C6 fungal-type); sequence CLTCRQRKKRCCETRPRCTECTRLRLNC. Positions 345–364 are disordered; that stretch reads PKPGTEHKNKPKDQKDDENT. A compositionally biased stretch (basic and acidic residues) spans 348 to 364; sequence GTEHKNKPKDQKDDENT.

Interacts with EFG1.

It is found in the nucleus. Transcriptional regulator of the switch between 2 heritable states, the white and opaque states. These 2 cell types differ in many characteristics, including cell structure, mating competence, and virulence. Each state is heritable for many generations, and switching between states occurs stochastically, at low frequency. Contributes to formation of the opaque state, but is not necessary for heritability of the opaque state. Plays a role in cell adhesion and pseudohyphal growth. Involved in acquisition of drug resistance and acts as a repressor of beta-glucan synthesis, thus negatively regulating cell wall integrity. Plays a role in adherence, invasion and damage to oral epithelial cells. This chain is Zinc cluster transcription factor CZF1 (CZF1), found in Candida albicans (strain SC5314 / ATCC MYA-2876) (Yeast).